Here is a 484-residue protein sequence, read N- to C-terminus: tRNA sulfurtransferase (484 aa).

Positions 63-167 constitute a THUMP domain; it reads REMIERLTCT…LDRLFVIHRQ (105 aa). ATP is bound by residues 185 to 186, lysine 267, glycine 289, and glutamine 298; that span reads LM. A disulfide bridge connects residues cysteine 346 and cysteine 457. The Rhodanese domain maps to 405-483; sequence VLPGQIVIDI…GHTNVRVYRP (79 aa). Residue cysteine 457 is the Cysteine persulfide intermediate of the active site.

The protein belongs to the ThiI family.

The protein resides in the cytoplasm. The catalysed reaction is [ThiI sulfur-carrier protein]-S-sulfanyl-L-cysteine + a uridine in tRNA + 2 reduced [2Fe-2S]-[ferredoxin] + ATP + H(+) = [ThiI sulfur-carrier protein]-L-cysteine + a 4-thiouridine in tRNA + 2 oxidized [2Fe-2S]-[ferredoxin] + AMP + diphosphate. It carries out the reaction [ThiS sulfur-carrier protein]-C-terminal Gly-Gly-AMP + S-sulfanyl-L-cysteinyl-[cysteine desulfurase] + AH2 = [ThiS sulfur-carrier protein]-C-terminal-Gly-aminoethanethioate + L-cysteinyl-[cysteine desulfurase] + A + AMP + 2 H(+). Its pathway is cofactor biosynthesis; thiamine diphosphate biosynthesis. Functionally, catalyzes the ATP-dependent transfer of a sulfur to tRNA to produce 4-thiouridine in position 8 of tRNAs, which functions as a near-UV photosensor. Also catalyzes the transfer of sulfur to the sulfur carrier protein ThiS, forming ThiS-thiocarboxylate. This is a step in the synthesis of thiazole, in the thiamine biosynthesis pathway. The sulfur is donated as persulfide by IscS. The chain is tRNA sulfurtransferase from Pseudomonas aeruginosa (strain UCBPP-PA14).